The chain runs to 280 residues: Ribonuclease Z (280 aa).

7 residues coordinate Zn(2+): His61, His63, Asp65, His66, His153, Asp176, and His240. Asp65 functions as the Proton acceptor in the catalytic mechanism.

This sequence belongs to the RNase Z family. Homodimer. Requires Zn(2+) as cofactor.

The enzyme catalyses Endonucleolytic cleavage of RNA, removing extra 3' nucleotides from tRNA precursor, generating 3' termini of tRNAs. A 3'-hydroxy group is left at the tRNA terminus and a 5'-phosphoryl group is left at the trailer molecule.. Zinc phosphodiesterase, which displays some tRNA 3'-processing endonuclease activity. Probably involved in tRNA maturation, by removing a 3'-trailer from precursor tRNA. In Mycolicibacterium paratuberculosis (strain ATCC BAA-968 / K-10) (Mycobacterium paratuberculosis), this protein is Ribonuclease Z.